We begin with the raw amino-acid sequence, 219 residues long: MHLRAKPWATDWLAAHSDIVITQGRATEQIGQWQKLFAKAQPIHVEIGSGKGQFILGMALAHPEINYIGMEIQETAVAIAARKSFDQVGELPNLRYIYGNGNGVETYFEKAEVEKIYLNFSDPWPKTRHESRRLTYKTFLQSYEAVLPEHGEVEFKTDNRHLFEYSIVSFMNYGMRWATTDFTLDLHADAEKVIGNVETEYEQKFMAKGQPIYKIKAHF.

Residues E46, E71, N100, and D122 each contribute to the S-adenosyl-L-methionine site. D122 is an active-site residue. Residues K126, D158, and 199-202 (TEYE) contribute to the substrate site.

Belongs to the class I-like SAM-binding methyltransferase superfamily. TrmB family.

The catalysed reaction is guanosine(46) in tRNA + S-adenosyl-L-methionine = N(7)-methylguanosine(46) in tRNA + S-adenosyl-L-homocysteine. It functions in the pathway tRNA modification; N(7)-methylguanine-tRNA biosynthesis. Catalyzes the formation of N(7)-methylguanine at position 46 (m7G46) in tRNA. The sequence is that of tRNA (guanine-N(7)-)-methyltransferase from Leuconostoc citreum (strain KM20).